We begin with the raw amino-acid sequence, 302 residues long: UDP-N-acetylenolpyruvoylglucosamine reductase (302 aa).

Positions 23–188 (KVGGNAEIFF…LKAVFKVNKG (166 aa)) constitute an FAD-binding PCMH-type domain. Arginine 168 is a catalytic residue. Serine 217 functions as the Proton donor in the catalytic mechanism. Glutamate 287 is a catalytic residue.

Belongs to the MurB family. The cofactor is FAD.

Its subcellular location is the cytoplasm. It carries out the reaction UDP-N-acetyl-alpha-D-muramate + NADP(+) = UDP-N-acetyl-3-O-(1-carboxyvinyl)-alpha-D-glucosamine + NADPH + H(+). Its pathway is cell wall biogenesis; peptidoglycan biosynthesis. Cell wall formation. The protein is UDP-N-acetylenolpyruvoylglucosamine reductase of Rickettsia bellii (strain RML369-C).